Reading from the N-terminus, the 135-residue chain is Sex-regulated protein janus-A (135 aa).

K37 contacts substrate. H63 (proton acceptor) is an active-site residue. 104–106 (SQG) is a substrate binding site.

Belongs to the janus family.

Functionally, janA and janB regulate somatic sex differentiation. This Drosophila simulans (Fruit fly) protein is Sex-regulated protein janus-A (janA).